A 208-amino-acid chain; its full sequence is Protein-L-isoaspartate O-methyltransferase (208 aa).

Residue Ser-59 is part of the active site.

The protein belongs to the methyltransferase superfamily. L-isoaspartyl/D-aspartyl protein methyltransferase family.

It is found in the cytoplasm. The catalysed reaction is [protein]-L-isoaspartate + S-adenosyl-L-methionine = [protein]-L-isoaspartate alpha-methyl ester + S-adenosyl-L-homocysteine. In terms of biological role, catalyzes the methyl esterification of L-isoaspartyl residues in peptides and proteins that result from spontaneous decomposition of normal L-aspartyl and L-asparaginyl residues. It plays a role in the repair and/or degradation of damaged proteins. This chain is Protein-L-isoaspartate O-methyltransferase, found in Photorhabdus laumondii subsp. laumondii (strain DSM 15139 / CIP 105565 / TT01) (Photorhabdus luminescens subsp. laumondii).